The sequence spans 1186 residues: ATP-dependent helicase/deoxyribonuclease subunit B (1186 aa).

The UvrD-like helicase ATP-binding domain occupies 1 to 308; it reads MSVKFLLGRA…AHLEKEWGKN (308 aa). 8-15 contacts ATP; it reads GRAGSGKT. A UvrD-like helicase C-terminal domain is found at 288 to 620; the sequence is SLPRFKDNPA…LVGTADRSRY (333 aa). Positions 822, 1144, 1147, and 1153 each coordinate [4Fe-4S] cluster.

The protein belongs to the helicase family. AddB/RexB type 1 subfamily. As to quaternary structure, heterodimer of AddA and AddB. Mg(2+) is required as a cofactor. The cofactor is [4Fe-4S] cluster.

Its function is as follows. The heterodimer acts as both an ATP-dependent DNA helicase and an ATP-dependent, dual-direction single-stranded exonuclease. Recognizes the chi site generating a DNA molecule suitable for the initiation of homologous recombination. The AddB subunit has 5' -&gt; 3' nuclease activity but not helicase activity. In Natranaerobius thermophilus (strain ATCC BAA-1301 / DSM 18059 / JW/NM-WN-LF), this protein is ATP-dependent helicase/deoxyribonuclease subunit B.